Consider the following 571-residue polypeptide: Proline--tRNA ligase (571 aa).

The protein belongs to the class-II aminoacyl-tRNA synthetase family. ProS type 1 subfamily. As to quaternary structure, homodimer.

The protein localises to the cytoplasm. The catalysed reaction is tRNA(Pro) + L-proline + ATP = L-prolyl-tRNA(Pro) + AMP + diphosphate. In terms of biological role, catalyzes the attachment of proline to tRNA(Pro) in a two-step reaction: proline is first activated by ATP to form Pro-AMP and then transferred to the acceptor end of tRNA(Pro). As ProRS can inadvertently accommodate and process non-cognate amino acids such as alanine and cysteine, to avoid such errors it has two additional distinct editing activities against alanine. One activity is designated as 'pretransfer' editing and involves the tRNA(Pro)-independent hydrolysis of activated Ala-AMP. The other activity is designated 'posttransfer' editing and involves deacylation of mischarged Ala-tRNA(Pro). The misacylated Cys-tRNA(Pro) is not edited by ProRS. In Photobacterium profundum (strain SS9), this protein is Proline--tRNA ligase.